The sequence spans 216 residues: Probable transaldolase (216 aa).

K83 acts as the Schiff-base intermediate with substrate in catalysis.

The protein belongs to the transaldolase family. Type 3B subfamily.

It localises to the cytoplasm. It carries out the reaction D-sedoheptulose 7-phosphate + D-glyceraldehyde 3-phosphate = D-erythrose 4-phosphate + beta-D-fructose 6-phosphate. Its pathway is carbohydrate degradation; pentose phosphate pathway; D-glyceraldehyde 3-phosphate and beta-D-fructose 6-phosphate from D-ribose 5-phosphate and D-xylulose 5-phosphate (non-oxidative stage): step 2/3. In terms of biological role, transaldolase is important for the balance of metabolites in the pentose-phosphate pathway. The sequence is that of Probable transaldolase from Sphingopyxis alaskensis (strain DSM 13593 / LMG 18877 / RB2256) (Sphingomonas alaskensis).